The chain runs to 340 residues: Arginine N-succinyltransferase subunit beta (340 aa).

Belongs to the succinylarginine dihydrolase family. In terms of assembly, heterotetramer of two alpha and two beta subunits.

The catalysed reaction is succinyl-CoA + L-arginine = N(2)-succinyl-L-arginine + CoA + H(+). The protein operates within amino-acid degradation; L-arginine degradation via AST pathway; L-glutamate and succinate from L-arginine: step 1/5. In Pseudomonas aeruginosa (strain ATCC 15692 / DSM 22644 / CIP 104116 / JCM 14847 / LMG 12228 / 1C / PRS 101 / PAO1), this protein is Arginine N-succinyltransferase subunit beta (aruG).